Consider the following 23-residue polypeptide: Septenin 2 (23 aa).

In terms of tissue distribution, expressed in skin glands.

The protein resides in the secreted. In terms of biological role, may act as an antimicrobial peptide. This is Septenin 2 from Osteopilus septentrionalis (Cuban treefrog).